Consider the following 386-residue polypeptide: Putrescine N-methyltransferase 4 (386 aa).

3 stretches are compositionally biased toward polar residues: residues 1–14, 23–48, and 57–87; these read MEVI…STIF, GHQS…GHHN, and HQNG…NGNE. The disordered stretch occupies residues 1–87; sequence MEVISTNTNG…GTISHDNGNE (87 aa). In terms of domain architecture, PABS spans 97-334; it reads LGWFSEFSAL…GVIGYMLCST (238 aa). S-adenosyl-L-methionine is bound by residues Gln128, Glu203, and 234 to 235; that span reads DG. Asp253 (proton acceptor) is an active-site residue. Tyr322 contacts S-adenosyl-L-methionine.

The protein belongs to the class I-like SAM-binding methyltransferase superfamily. Putrescine methyltransferase family. Predominantly expressed in roots.

The enzyme catalyses putrescine + S-adenosyl-L-methionine = N-methylputrescine + S-adenosyl-L-homocysteine + H(+). It participates in alkaloid biosynthesis; nicotine biosynthesis. In terms of biological role, involved in the biosynthesis of pyridine alkaloid natural products, leading mainly to the production of anabasine, anatabine, nicotine and nornicotine, effective deterrents against herbivores with antiparasitic and pesticide properties (neurotoxins); nornicotine serves as the precursor in the synthesis of the carcinogen compound N'-nitrosonornicotine (NNN). Methyltransferase that mediates the conversion of putrescine to N-methylputrescine. Promotes leaves ripening. In Nicotiana tabacum (Common tobacco), this protein is Putrescine N-methyltransferase 4.